The sequence spans 207 residues: Ras-related protein Rab7 (207 aa).

Residues 15–22 (GDSSVGKT), 34–40 (SNQYKAT), 63–67 (DTAGQ), 125–128 (NKVD), and 156–157 (AK) contribute to the GTP site. The Effector region motif lies at 37–45 (YKATIGADF). Residues C205 and C207 are each lipidated (S-geranylgeranyl cysteine).

This sequence belongs to the small GTPase superfamily. Rab family. In terms of tissue distribution, expressed in eye (at protein level).

The protein resides in the early endosome membrane. The protein localises to the late endosome membrane. It localises to the lysosome membrane. It is found in the cytoplasmic vesicle. Its subcellular location is the autophagosome membrane. The protein resides in the autolysosome membrane. The protein localises to the presynapse. It localises to the perikaryon. The catalysed reaction is GTP + H2O = GDP + phosphate + H(+). Its function is as follows. Small GTPase which cycles between active GTP-bound and inactive GDP-bound states. In its active state, binds to a variety of effector proteins playing a key role in the regulation of endo-lysosomal trafficking. Involved in microtubule minus and plus end-directed endosomal migration and positioning, and endosome-lysosome transport through different protein-protein interaction cascades. Governs early-to-late endosomal to lysosomal maturation. Controls endocytic cargo sorting towards the late endosome facilitating its eventual endolysosomal-mediated degradation. Together with Rab2 involved in promoting fusion of autophagosomes and endosomes with lysosomes probably through recruitment of the HOPS tethering complex. Involved in biosynthetic transport to lysosomes. Involved in establishing morphogen concentration gradients, for example of the TGF-beta homolog dpp/decapentaplegic, during pattern formation and organogenesis. Together with the Mon1-Ccz1 complex, required for autolysosome formation in fat cells and autophagic degradation during starvation-induced basal and developmental autophagy. Together with Mon1, regulates levels of postsynaptic glutamate receptor GluRIIA in the neuromuscular junction (NMJ) presynapse. Required for autophagocytosis-dependent remodeling of myofibrils and transverse-tubules (T-tubules) during metamorphosis. Involved in intracellular trafficking of the carbohydrate transporter Tret1 in glial cells of the blood brain barrier, influencing its subcellular localization and protein levels. The chain is Ras-related protein Rab7 from Drosophila melanogaster (Fruit fly).